The chain runs to 599 residues: DNA primase (599 aa).

The CHC2-type zinc finger occupies 38–62; sequence CPFHDEKTPSFTVSEDKQICHCFGC. The region spanning 260-341 is the Toprim domain; that stretch reads DEIVLLEGFM…NVFVIQLPSG (82 aa). Positions 266, 310, and 312 each coordinate Mg(2+).

It belongs to the DnaG primase family. Monomer. Interacts with DnaB. The cofactor is Zn(2+). Requires Mg(2+) as cofactor.

The catalysed reaction is ssDNA + n NTP = ssDNA/pppN(pN)n-1 hybrid + (n-1) diphosphate.. In terms of biological role, RNA polymerase that catalyzes the synthesis of short RNA molecules used as primers for DNA polymerase during DNA replication. The protein is DNA primase of Staphylococcus aureus (strain COL).